A 167-amino-acid polypeptide reads, in one-letter code: MNKPICSTGLRWLWLVVVVLILDLGSKQLVLQHFHLYESVPLIPYFNLTYAQNFGAAFSFLAEKDGWQRWFFAFIAVAISVVLMVMMYRASAKKKLSNIAYALIIGGALGNLFDRLVHGFVIDFIDFYVGDWHFPTFNIADMAICIGAGLVIIDSFLSPDEKTIKVG.

4 consecutive transmembrane segments (helical) span residues Ile5–Gly25, Leu42–Ala62, Trp70–Ala90, and Ala102–Ile122. Residues Asp123 and Asp141 contribute to the active site. The helical transmembrane segment at Phe137–Leu157 threads the bilayer.

This sequence belongs to the peptidase A8 family.

It localises to the cell inner membrane. The catalysed reaction is Release of signal peptides from bacterial membrane prolipoproteins. Hydrolyzes -Xaa-Yaa-Zaa-|-(S,diacylglyceryl)Cys-, in which Xaa is hydrophobic (preferably Leu), and Yaa (Ala or Ser) and Zaa (Gly or Ala) have small, neutral side chains.. The protein operates within protein modification; lipoprotein biosynthesis (signal peptide cleavage). Functionally, this protein specifically catalyzes the removal of signal peptides from prolipoproteins. In Photorhabdus laumondii subsp. laumondii (strain DSM 15139 / CIP 105565 / TT01) (Photorhabdus luminescens subsp. laumondii), this protein is Lipoprotein signal peptidase.